A 341-amino-acid polypeptide reads, in one-letter code: Ribosomal RNA small subunit methyltransferase H (341 aa).

S-adenosyl-L-methionine is bound by residues 47–49 (GGY), Asp-64, Phe-91, Asp-109, and Gln-116.

Belongs to the methyltransferase superfamily. RsmH family.

The protein localises to the cytoplasm. It carries out the reaction cytidine(1402) in 16S rRNA + S-adenosyl-L-methionine = N(4)-methylcytidine(1402) in 16S rRNA + S-adenosyl-L-homocysteine + H(+). Specifically methylates the N4 position of cytidine in position 1402 (C1402) of 16S rRNA. In Sinorhizobium medicae (strain WSM419) (Ensifer medicae), this protein is Ribosomal RNA small subunit methyltransferase H.